Reading from the N-terminus, the 172-residue chain is Small ribosomal subunit protein bS16 (172 aa).

Residues 125–172 (KKRKAKEEAEAKAAAEKAAEEAAAAEAAKAEEEAAKAEEADSAEESAE) are disordered. Basic and acidic residues-rich tracts occupy residues 129 to 144 (AKEE…KAAE) and 152 to 163 (AKAEEEAAKAEE).

It belongs to the bacterial ribosomal protein bS16 family.

The protein is Small ribosomal subunit protein bS16 of Corynebacterium aurimucosum (strain ATCC 700975 / DSM 44827 / CIP 107346 / CN-1) (Corynebacterium nigricans).